Here is a 121-residue protein sequence, read N- to C-terminus: Basic phospholipase A2 homolog GodMT-II (121 aa).

Cystine bridges form between C26-C115, C28-C44, C43-C95, C49-C121, C50-C88, C57-C81, and C75-C86. The interval 105–117 (KNYKIYPKPLCKK) is important for membrane-damaging activities in eukaryotes and bacteria; heparin-binding.

This sequence belongs to the phospholipase A2 family. Group II subfamily. K49 sub-subfamily. As to quaternary structure, monomer. As to expression, expressed by the venom gland.

It localises to the secreted. Its function is as follows. Snake venom phospholipase A2 homolog that lacks enzymatic activity but shows high myotoxic activities. In vivo, induces a mild edema when subcutaneously injected into mice foot pad. The polypeptide is Basic phospholipase A2 homolog GodMT-II (Cerrophidion godmani (Porthidium godmani)).